The primary structure comprises 126 residues: Probable prefoldin subunit 6 (126 aa).

Belongs to the prefoldin subunit beta family. As to quaternary structure, heterohexamer of two PFD-alpha type and four PFD-beta type subunits. Expressed in embryonic blastomeres and gonads.

It is found in the cytoplasm. Functionally, binds specifically to cytosolic chaperonin (c-CPN) and transfers target proteins to it. Binds to nascent polypeptide chain and promotes folding in an environment in which there are many competing pathways for nonnative proteins. Required for positioning of the mitotic spindle. In Caenorhabditis elegans, this protein is Probable prefoldin subunit 6 (pfd-6).